The chain runs to 361 residues: Fructose-bisphosphate aldolase (361 aa).

Thr-2 is subject to N-acetylthreonine. Substrate-binding residues include Arg-56 and Lys-147. Glu-188 acts as the Proton acceptor in catalysis. Lys-230 functions as the Schiff-base intermediate with dihydroxyacetone-P in the catalytic mechanism.

It belongs to the class I fructose-bisphosphate aldolase family. In terms of assembly, homotetramer. In terms of tissue distribution, mainly expressed in the heads and partly in the thoraxes of adult flies. As to expression, expressed in all adult tissues. The Alpha-beta mRNA shows strong expression in the abdomens of adults. Mainly expressed in adult abdominal regions and is also expressed in lesser amounts in other parts of the body. The Beta-gamma mRNA is expressed in adult heads.

The enzyme catalyses beta-D-fructose 1,6-bisphosphate = D-glyceraldehyde 3-phosphate + dihydroxyacetone phosphate. It functions in the pathway carbohydrate degradation; glycolysis; D-glyceraldehyde 3-phosphate and glycerone phosphate from D-glucose: step 4/4. Enzyme of the glycolytic pathway. Glycolysis is essential in glial cells but not in neurons; neurons rely on the citric acid cycle for their energy needs, and on lactate and alanine secreted into the hemolymph by glial cells to fuel it. May take part in developmental stage-specific or tissue -specific sugar-phosphate metabolisms. Protein acts on two substrates fructose 1,6-bisphosphate and fructose 1-phosphate (like other class I aldolases). The polypeptide is Fructose-bisphosphate aldolase (Drosophila melanogaster (Fruit fly)).